Reading from the N-terminus, the 63-residue chain is Large ribosomal subunit protein uL30 (63 aa).

The protein belongs to the universal ribosomal protein uL30 family. In terms of assembly, part of the 50S ribosomal subunit.

The protein is Large ribosomal subunit protein uL30 of Bradyrhizobium sp. (strain ORS 278).